The primary structure comprises 357 residues: uncharacterized protein (357 aa).

This is an uncharacterized protein from Caenorhabditis elegans.